The sequence spans 604 residues: Beta-alanine transporter (604 aa).

The Cytoplasmic segment spans residues 1 to 23 (MDFDEVLREVGSFGLYQKVIICS). Residues 24-44 (VLLPAALPCAFHAYSQLFIAA) form a helical membrane-spanning segment. The Extracellular segment spans residues 45–151 (TPQHFCRVPE…QEWNLVCDRS (107 aa)). N-linked (GlcNAc...) asparagine glycans are attached at residues Asn-68 and Asn-88. A helical membrane pass occupies residues 152–172 (FLVTLALVVFGVGGLLGNYVF). Over 173-182 (GYLVDLWGRR) the chain is Cytoplasmic. Residues 183 to 203 (PSFYAYLLLEIIACAASAFAW) form a helical membrane-spanning segment. At 204 to 212 (NYYTWLGLR) the chain is on the extracellular side. A helical membrane pass occupies residues 213-233 (FVVGLTVPAILASPYVLAIEL). Residues 234–243 (VGPERRVFCT) lie on the Cytoplasmic side of the membrane. Residues 244 to 264 (IVSNIAYSLGLVVLAGVIYIV) traverse the membrane as a helical segment. The Extracellular portion of the chain corresponds to 265–268 (RDWR). Residues 269 to 289 (ELSLAVSMPLLMLFSCFFVLP) traverse the membrane as a helical segment. Over 290 to 362 (ESPRWLMAVG…FRGPNMRRKT (73 aa)) the chain is Cytoplasmic. Residues 363–383 (LIITLIWFANTSVYVGLSYYA) traverse the membrane as a helical segment. At 384–390 (PALGGDE) the chain is on the extracellular side. The helical transmembrane segment at 391 to 411 (IWNFFLAGAVELPTYLLLWPG) threads the bilayer. Topologically, residues 412–418 (LSYFGRR) are cytoplasmic. A helical membrane pass occupies residues 419–439 (WILFISMLVGGVACVATFLYP). The Extracellular portion of the chain corresponds to 440–442 (DIT). A helical transmembrane segment spans residues 443 to 463 (LLLYCVGKMGISSSFVVLPLM). Over 464-473 (ASELYPTVVR) the chain is Cytoplasmic. A helical transmembrane segment spans residues 474 to 494 (GLGMSFSSVISMVGPIVIPMI). The Extracellular segment spans residues 495–501 (NHMGQQM). The helical transmembrane segment at 502 to 522 (LVLPLIVMGALLILGGFASLL) threads the bilayer. At 523–604 (LPETRNRNLP…SICKNEMRTL (82 aa)) the chain is on the cytoplasmic side.

The protein belongs to the major facilitator (TC 2.A.1) superfamily. Organic cation transporter (TC 2.A.1.19) family. Expressed in the head and predominantly in the retinal pigment cells of the compound eye.

The protein localises to the cell membrane. Beta-alanine transporter required for the uptake of beta-alanine by the glia. Required for the recycling process of the neurotransmitter histamine in photoreceptor neurons of the compound eye and therefore for photoreceptor synaptic transmission. Following histamine release from photoreceptors and its uptake by glia, histamine is conjugated to beta-alanine by e/Ebony to form the inactive metabolite, carcinine. This Drosophila melanogaster (Fruit fly) protein is Beta-alanine transporter.